Here is a 319-residue protein sequence, read N- to C-terminus: Aspartate carbamoyltransferase catalytic subunit (319 aa).

Carbamoyl phosphate contacts are provided by arginine 65 and threonine 66. Lysine 93 contributes to the L-aspartate binding site. Positions 115, 149, and 152 each coordinate carbamoyl phosphate. Residues arginine 182 and arginine 237 each coordinate L-aspartate. Glycine 278 and proline 279 together coordinate carbamoyl phosphate.

The protein belongs to the aspartate/ornithine carbamoyltransferase superfamily. ATCase family. Heterododecamer (2C3:3R2) of six catalytic PyrB chains organized as two trimers (C3), and six regulatory PyrI chains organized as three dimers (R2).

The catalysed reaction is carbamoyl phosphate + L-aspartate = N-carbamoyl-L-aspartate + phosphate + H(+). The protein operates within pyrimidine metabolism; UMP biosynthesis via de novo pathway; (S)-dihydroorotate from bicarbonate: step 2/3. Its function is as follows. Catalyzes the condensation of carbamoyl phosphate and aspartate to form carbamoyl aspartate and inorganic phosphate, the committed step in the de novo pyrimidine nucleotide biosynthesis pathway. The polypeptide is Aspartate carbamoyltransferase catalytic subunit (Janthinobacterium sp. (strain Marseille) (Minibacterium massiliensis)).